The primary structure comprises 1014 residues: Chondroitin sulfate ABC exolyase (1014 aa).

The N-terminal stretch at 1–14 (MLILSFLCPAFLNA) is a signal peptide. Ca(2+) is bound by residues Ser24, Glu26, Asp50, His53, and Asp161. Catalysis depends on proton acceptor residues His345 and His454. The Proton donor role is filled by Tyr461.

Belongs to the polysaccharide lyase 8 family. Monomer. Ca(2+) serves as cofactor. Requires Mg(2+) as cofactor.

Its subcellular location is the periplasm. The enzyme catalyses Exolytic removal of Delta(4)-unsaturated disaccharide residues from the non-reducing ends of both polymeric chondroitin/dermatan sulfates and their oligosaccharide fragments.. Specific activity for chondroitin sulfate substrates increases moderately (2-fold) while an increase of 25-fold is observed for dermatan sulfate as substrate upon addition of Ca(2+) or Mg(2+) ions. Increasing the concentration of Na(+), K(+) or Cs(+) chloride from 0 to 0.1 M, increases the activity against all substrates. Further increases in salt concentration reduces the activity dramatically, with 50% inhibition occurring at 0.15 M and nearly complete inhibition at 0.4 M salt. The addition of 10 mM Ca(2+) or Mg(2+) ions increases the activity against chondroitin 4- and 6-sulfates by 2-3-fold, while the activity against dermatan sulfate increases much more significantly by 50-fold. Addition of Mn(2+) and Zn(2+) reduces activity against chondroitin sulfate substrates, but increases the activity against dermatan sulfate. Increasing the concentration of CaCl(2) with both chondroitin 4- and 6-sulfates from 0 to 0.04 M increases the activity. A further increase reduces activity, with 50% inhibition at 0.065-0.085 M and a complete inhibition of the reaction at 0.2 M. In case of dermatan sulfate, the addition of low concentration of CaCl(2) dramatically increases the activity from the basal level. The maximal activity is reached at 0.01 M CaCl(2). Functionally, broad-specificity glycosaminoglycan lyase, which acts in an exolytic fashion degrading chondroitin sulfates and dermatan sulfate to yield only disaccharide products. Has a preference for chondroitin 4-sulfate over chondroitin 6-sulfate. Has extremely low activity against hyaluronic acid. Is not active against acharan sulfate, heparin or heparan sulfate. The sequence is that of Chondroitin sulfate ABC exolyase (chonabc) from Bacteroides thetaiotaomicron.